Here is a 583-residue protein sequence, read N- to C-terminus: 2-succinyl-5-enolpyruvyl-6-hydroxy-3-cyclohexene-1-carboxylate synthase (583 aa).

Belongs to the TPP enzyme family. MenD subfamily. In terms of assembly, homodimer. The cofactor is Mg(2+). Mn(2+) is required as a cofactor. It depends on thiamine diphosphate as a cofactor.

It catalyses the reaction isochorismate + 2-oxoglutarate + H(+) = 5-enolpyruvoyl-6-hydroxy-2-succinyl-cyclohex-3-ene-1-carboxylate + CO2. Its pathway is quinol/quinone metabolism; 1,4-dihydroxy-2-naphthoate biosynthesis; 1,4-dihydroxy-2-naphthoate from chorismate: step 2/7. It functions in the pathway quinol/quinone metabolism; menaquinone biosynthesis. Its function is as follows. Catalyzes the thiamine diphosphate-dependent decarboxylation of 2-oxoglutarate and the subsequent addition of the resulting succinic semialdehyde-thiamine pyrophosphate anion to isochorismate to yield 2-succinyl-5-enolpyruvyl-6-hydroxy-3-cyclohexene-1-carboxylate (SEPHCHC). The polypeptide is 2-succinyl-5-enolpyruvyl-6-hydroxy-3-cyclohexene-1-carboxylate synthase (Chlorobium limicola (strain DSM 245 / NBRC 103803 / 6330)).